The sequence spans 191 residues: Thymidylate kinase (191 aa).

7 to 14 (GVDGAGKS) is a binding site for ATP.

It belongs to the thymidylate kinase family.

The catalysed reaction is dTMP + ATP = dTDP + ADP. In terms of biological role, phosphorylation of dTMP to form dTDP in both de novo and salvage pathways of dTTP synthesis. The polypeptide is Thymidylate kinase (Helicobacter pylori (strain P12)).